The chain runs to 1384 residues: MKAPAVLAPGILVLLFTFVQKSNGECKEALVKSRMNVNMQYQLPNFTAETSIQNVVLHKHHIYLGAINYIYVLNDKDLQKVAEYKTGPVLEHPDCFPCQDCSHKANLSGGVWKDNINMALLVDTYYDDQLISCGSVHRGTCQRHVLPPNNTADIESEVHCMYSPQADEETNQCPDCVVSALGTKVLLSEKDRFINFFVGNTINSSYLPDYILHSISVRRLKETQDGFKFLTDQSYIDVLPELRDSYPIKYVHAFESNHFIYFLTVQRETLDAQTFHTRIIRFCSADSGLHSYMEMPLECILTEKRRKRSTKQEVFNILQAAYVSKPGAQLARQIGASLNDDILYGVFAQSKPDSSEPMNRSAVCAFPVKYVNEFFNKIVNKNNVRCLQHFYGPNHEHCFNRTLLRNSSGCEVRNDEYRTEFTTALPRVDLFTGQFNQVLLTSISTFIKGDLTIANLGTSEGRFMQVVVSRSGSLTPHVNFHLDSHPVSPEVIVEHPLNQNGYTLVVTGKKITKIPLNGLGCEHFQSCSQCLSAPSFVQCGWCHDKCVRLEECSSGTWTQETCLPTIYKVFPTSAPLEGGTTLTVCGWDFGFKRNNKFDLKKTRVLLGNESCTLTLTESTTNMLKCTVGPAMNEHFNMSIVISNSRGSVEYSAFSYVDPIITSISPNYGPKTGGTLLTLTGKHLNSGNSRHISIGGKTCTLKSVSHSILECYTPAQSAPTEFSVKLKIDLANREVNSFIYREDPIVYEIHPTKSFISGGSTITGVGKNLNSVSVLRMVINVHEAGRNFTVACQHRSNSEIICCTTPSIEQLNLQLPLKTKAFFMLDGIHSKYFDLIYVHNPVFKPFEKPVMISVGNENVLEIKGNDIDPEAVKGEVLKVGNKSCENIHSHSEAVLCTVPSDLLKLNSELNIEWKQAISSTVLGKVIVQPDQNFTGLIVGVVSISIILLLLLGLFLWLKKRKQIKDLGSELVRYDARVHTPHLDRLVSARSVSPTTEMVSNESVDYRATFPEDQFPNASQNGSCRQVQYPLTDLSPILTSGDSDISSPLLQNTIHIDLSALNPELVQAVQHVVIGPSSLIVHFNEVIGRGHFGCVYHGTLLDNDDKKIHCAVKSLNRITDIGEVSQFLTEGIIMKDFSHPNVLSLLGICLRSEGSPLVVLPYMKHGDLRNFIRNETHNPTVKDLIGFGLQVAKGMEYLASKKFVHRDLAARNCMLDEKFTVKVADFGLARDVYDKEYYSVHNKTGAKLPVKWMALESLQTQKFTTKSDVWSFGVLLWELMTRGAPPYPDVNTFDITVYLLQGRRLLQPEYCPDPLYEVMLKCWHPKAELRPSFSELVSRISVIFSTFIGEHYVHVNATYVNVKCVAPYPSLLSSQDNVSGEDDDDT.

A signal peptide spans 1 to 24 (MKAPAVLAPGILVLLFTFVQKSNG). Topologically, residues 25-933 (ECKEALVKSR…VIVQPDQNFT (909 aa)) are extracellular. A Sema domain is found at 27–516 (KEALVKSRMN…TGKKITKIPL (490 aa)). The N-linked (GlcNAc...) asparagine glycan is linked to N45. 4 disulfides stabilise this stretch: C95-C101, C98-C160, C133-C141, and C173-C176. An N-linked (GlcNAc...) asparagine glycan is attached at N106. N149 is a glycosylation site (N-linked (GlcNAc...) asparagine). N-linked (GlcNAc...) asparagine glycosylation is found at N203 and N359. 2 cysteine pairs are disulfide-bonded: C299–C364 and C386–C398. N-linked (GlcNAc...) asparagine glycans are attached at residues N400 and N406. 4 disulfide bridges follow: C521/C539, C527/C562, C530/C546, and C542/C552. IPT/TIG domains lie at 564–656 (PTIY…FSYV), 658–740 (PIIT…FIYR), and 743–837 (PIVY…LIYV). T583 carries an O-linked (Man) threonine glycan. Residues N608 and N636 are each glycosylated (N-linked (GlcNAc...) asparagine). T677 and T762 each carry an O-linked (Man) threonine glycan. Residues N786, N880, and N931 are each glycosylated (N-linked (GlcNAc...) asparagine). The chain crosses the membrane as a helical span at residues 934-956 (GLIVGVVSISIILLLLLGLFLWL). The Cytoplasmic portion of the chain corresponds to 957–1384 (KKRKQIKDLG…NVSGEDDDDT (428 aa)). S967 carries the phosphoserine modification. Residue T978 is modified to Phosphothreonine. S991, S998, and S1001 each carry phosphoserine. Residue Y1004 is modified to Phosphotyrosine. Residues 1079 to 1346 (VHFNEVIGRG…RISVIFSTFI (268 aa)) enclose the Protein kinase domain. ATP contacts are provided by residues 1085–1093 (IGRGHFGCV) and K1111. D1205 acts as the Proton acceptor in catalysis. Positions 1213 to 1382 (LDEKFTVKVA…QDNVSGEDDD (170 aa)) are interaction with RANBP9. At Y1231 the chain carries Phosphotyrosine. Residues Y1235 and Y1236 each carry the phosphotyrosine; by autocatalysis modification. Phosphothreonine is present on T1290. The interval 1321–1360 (WHPKAELRPSFSELVSRISVIFSTFIGEHYVHVNATYVNV) is interaction with MUC20. Phosphotyrosine; by autocatalysis is present on residues Y1350 and Y1357. Phosphotyrosine is present on Y1366.

This sequence belongs to the protein kinase superfamily. Tyr protein kinase family. Heterodimer made of an alpha chain (50 kDa) and a beta chain (145 kDa) which are disulfide linked. Binds PLXNB1. Interacts when phosphorylated with downstream effectors including STAT3, PIK3R1, SRC, PCLG1, GRB2 and GAB1. Interacts with SPSB1, SPSB2 and SPSB4. Interacts with INPP5D/SHIP1. When phosphorylated at Tyr-1357, interacts with INPPL1/SHIP2. Interacts with RANBP9 and RANBP10, as well as SPSB1, SPSB2, SPSB3 and SPSB4. SPSB1 binding occurs in the presence and in the absence of HGF, however HGF treatment has a positive effect on this interaction. Interacts with MUC20; prevents interaction with GRB2 and suppresses hepatocyte growth factor-induced cell proliferation. Interacts with GRB10. Interacts with PTPN1 and PTPN2. Interacts with HSP90AA1 and HSP90AB1; the interaction suppresses MET kinase activity. Interacts with tensin TNS3. Interacts (when phosphorylated) with tensin TNS4 (via SH2 domain); the interaction increases MET protein stability by inhibiting MET endocytosis and subsequent lysosomal degradation. In terms of processing, autophosphorylated in response to ligand binding on Tyr-1235 and Tyr-1236 in the kinase domain leading to further phosphorylation of Tyr-1350 and Tyr-1357 in the C-terminal multifunctional docking site. Dephosphorylated by PTPRJ at Tyr-1350 and Tyr-1366. Dephosphorylated by PTPN1 and PTPN2. Ubiquitinated. Ubiquitination by CBL regulates the receptor stability and activity through proteasomal degradation. Post-translationally, O-mannosylation of IPT/TIG domains by TMEM260 is required for protein maturation. O-mannosylated residues are composed of single mannose glycans that are not elongated or modified. In terms of tissue distribution, expressed in many tissues, including liver, lung, heart, spleen and mammary gland.

The protein localises to the membrane. The catalysed reaction is L-tyrosyl-[protein] + ATP = O-phospho-L-tyrosyl-[protein] + ADP + H(+). In its inactive state, the C-terminal tail interacts with the catalytic domain and inhibits the kinase activity. Upon ligand binding, the C-terminal tail is displaced and becomes phosphorylated, thus increasing the kinase activity. Receptor tyrosine kinase that transduces signals from the extracellular matrix into the cytoplasm by binding to hepatocyte growth factor/HGF ligand. Regulates many physiological processes including proliferation, scattering, morphogenesis and survival. Ligand binding at the cell surface induces autophosphorylation of MET on its intracellular domain that provides docking sites for downstream signaling molecules. Following activation by ligand, interacts with the PI3-kinase subunit PIK3R1, PLCG1, SRC, GRB2, STAT3 or the adapter GAB1. Recruitment of these downstream effectors by MET leads to the activation of several signaling cascades including the RAS-ERK, PI3 kinase-AKT, or PLCgamma-PKC. The RAS-ERK activation is associated with the morphogenetic effects while PI3K/AKT coordinates prosurvival effects. During embryonic development, MET signaling plays a role in gastrulation, development and migration of muscles and neuronal precursors, angiogenesis and kidney formation. In adults, participates in wound healing as well as organ regeneration and tissue remodeling. Also promotes differentiation and proliferation of hematopoietic cells. The sequence is that of Hepatocyte growth factor receptor (MET) from Bos taurus (Bovine).